The chain runs to 533 residues: DELLA protein 2 (533 aa).

The span at 1-12 shows a compositional bias: basic and acidic residues; the sequence is MKREHKLEHEDM. Residues 1–24 are disordered; that stretch reads MKREHKLEHEDMSSGSGKSGVCWE. The DELLA motif signature appears at 31-35; it reads DELLA. In terms of domain architecture, GRAS spans 157 to 522; it reads VETQEKGIRL…RPLIATSAWK (366 aa). Residues 164–218 form a leucine repeat I (LRI) region; that stretch reads IRLVHSLMACAEAVEQNNLKMAEALVKQIGYLAVSQEGAMRKVATYFAEGLARRI. Residues 166 to 203 are required for possible homodimerization; the sequence is LVHSLMACAEAVEQNNLKMAEALVKQIGYLAVSQEGAM. The LxCxE motif; degenerate signature appears at 171–175; sequence MACAE. The tract at residues 232-297 is VHIID; sequence QIHFYETCPN…GGPPAFRLTG (66 aa). The short motif at 263-267 is the VHIID element; sequence VHVID. A leucine repeat II (LRII) region spans residues 311-343; sequence QVGWRLAQFAQTIHVQFEYRGFVANSLADLDAS. Residues 355–443 are PFYRE; sequence VAVNSVFELH…EVYLGKQICN (89 aa). An LXXLL motif; degenerate motif is present at residues 363-367; that stretch reads LHKLN. An SAW region spans residues 446 to 522; the sequence is ACEGTDRVER…RPLIATSAWK (77 aa).

Belongs to the GRAS family. DELLA subfamily. May be a homodimer. Post-translationally, ubiquitinated. Upon GA application it is ubiquitinated, leading to its subsequent degradation.

It is found in the nucleus. Functionally, probable transcriptional regulator that acts as a repressor of the gibberellin (GA) signaling pathway. Probably acts by participating in large multiprotein complexes that repress transcription of GA-inducible genes. Upon GA application, it is degraded by the proteasome, allowing the GA signaling pathway. Together with DELLA1, required to enable arbuscule development during arbuscular mycorrhizal (AM) symbiosis with AM fungi (e.g. Glomus versiforme) via the regulation of RAM1 which, in turn, regulates various AM genes (e.g. NSP1, NSP2, PT4, LEC5, RAM2, EXO70I, STR and RAD1). The polypeptide is DELLA protein 2 (Medicago truncatula (Barrel medic)).